Here is a 343-residue protein sequence, read N- to C-terminus: N-acetyl-gamma-glutamyl-phosphate reductase (343 aa).

The active site involves cysteine 147.

The protein belongs to the NAGSA dehydrogenase family. Type 1 subfamily.

It is found in the cytoplasm. It carries out the reaction N-acetyl-L-glutamate 5-semialdehyde + phosphate + NADP(+) = N-acetyl-L-glutamyl 5-phosphate + NADPH + H(+). It functions in the pathway amino-acid biosynthesis; L-arginine biosynthesis; N(2)-acetyl-L-ornithine from L-glutamate: step 3/4. Its function is as follows. Catalyzes the NADPH-dependent reduction of N-acetyl-5-glutamyl phosphate to yield N-acetyl-L-glutamate 5-semialdehyde. The sequence is that of N-acetyl-gamma-glutamyl-phosphate reductase from Staphylococcus aureus (strain Mu3 / ATCC 700698).